The sequence spans 378 residues: Putative monoglyceride lipase (378 aa).

Positions Gly97–Gly101 match the GXSXG motif. Ser99 acts as the Nucleophile in catalysis. Catalysis depends on charge relay system residues Asp219 and His249. Basic and acidic residues predominate over residues Pro276 to Lys292. The tract at residues Pro276–Thr350 is disordered. Residues Pro293–Thr305 are compositionally biased toward low complexity. At Ser301 the chain carries Phosphoserine. A compositionally biased stretch (polar residues) spans Thr341–Thr350.

This sequence belongs to the AB hydrolase superfamily. Monoacylglycerol lipase family.

It localises to the lipid droplet. Its subcellular location is the cytoplasm. It is found in the endoplasmic reticulum. The protein localises to the mitochondrion outer membrane. It catalyses the reaction Hydrolyzes glycerol monoesters of long-chain fatty acids.. The protein operates within glycerolipid metabolism; triacylglycerol degradation. Converts monoacylglycerides (MAG) to free fatty acids and glycerol. Has a strong preference for monounsaturated monoglycerides. Required for efficient degradation of MAG, short-lived intermediates of glycerolipid metabolism which may also function as lipid signaling molecules. Controls inactivation of the signaling lipid N-palmitoylethanolamine (PEA). Involved in fatty acid ethyl ester (FAEE) catabolism. FAEEs are non-oxidative metabolites of ethanol that are transiently incorporated into lipid droplets (LDs). Their mobilization by LD-resident FAEE hydrolases facilitates a controlled metabolism of these potentially toxic lipid metabolites. The sequence is that of Putative monoglyceride lipase (mgl1) from Schizosaccharomyces pombe (strain 972 / ATCC 24843) (Fission yeast).